The following is a 100-amino-acid chain: Large ribosomal subunit protein uL23 (100 aa).

This sequence belongs to the universal ribosomal protein uL23 family. Part of the 50S ribosomal subunit. Contacts protein L29, and trigger factor when it is bound to the ribosome.

Its function is as follows. One of the early assembly proteins it binds 23S rRNA. One of the proteins that surrounds the polypeptide exit tunnel on the outside of the ribosome. Forms the main docking site for trigger factor binding to the ribosome. The chain is Large ribosomal subunit protein uL23 from Shewanella denitrificans (strain OS217 / ATCC BAA-1090 / DSM 15013).